Reading from the N-terminus, the 164-residue chain is Protein PPLZ02 (164 aa).

The AP2/ERF DNA-binding region spans R7 to P64.

It localises to the nucleus. Functionally, essential for all lupin cells independent of the respective tissue. In Lupinus polyphyllus (Large-leaved lupine), this protein is Protein PPLZ02 (PPLZ02).